Reading from the N-terminus, the 395-residue chain is NAD(P)H-quinone oxidoreductase subunit H, chloroplastic (395 aa).

This sequence belongs to the complex I 49 kDa subunit family. As to quaternary structure, NDH is composed of at least 16 different subunits, 5 of which are encoded in the nucleus.

Its subcellular location is the plastid. The protein resides in the chloroplast thylakoid membrane. The enzyme catalyses a plastoquinone + NADH + (n+1) H(+)(in) = a plastoquinol + NAD(+) + n H(+)(out). It carries out the reaction a plastoquinone + NADPH + (n+1) H(+)(in) = a plastoquinol + NADP(+) + n H(+)(out). Functionally, NDH shuttles electrons from NAD(P)H:plastoquinone, via FMN and iron-sulfur (Fe-S) centers, to quinones in the photosynthetic chain and possibly in a chloroplast respiratory chain. The immediate electron acceptor for the enzyme in this species is believed to be plastoquinone. Couples the redox reaction to proton translocation, and thus conserves the redox energy in a proton gradient. The polypeptide is NAD(P)H-quinone oxidoreductase subunit H, chloroplastic (Citrus sinensis (Sweet orange)).